A 64-amino-acid polypeptide reads, in one-letter code: Large ribosomal subunit protein uL30 (64 aa).

The protein belongs to the universal ribosomal protein uL30 family. Part of the 50S ribosomal subunit.

This is Large ribosomal subunit protein uL30 from Syntrophus aciditrophicus (strain SB).